The sequence spans 192 residues: Ribosomal RNA small subunit methyltransferase G (192 aa).

Residues glycine 59, 111–112, and arginine 124 contribute to the S-adenosyl-L-methionine site; that span reads IE.

It belongs to the methyltransferase superfamily. RNA methyltransferase RsmG family.

Its subcellular location is the cytoplasm. In terms of biological role, specifically methylates the N7 position of a guanine in 16S rRNA. This Mycoplasma genitalium (strain ATCC 33530 / DSM 19775 / NCTC 10195 / G37) (Mycoplasmoides genitalium) protein is Ribosomal RNA small subunit methyltransferase G.